We begin with the raw amino-acid sequence, 75 residues long: Sperm-specific protein PL-I (75 aa).

The 73-residue stretch at 2–74 (GSSGMMSMVA…GSAGWVLVPK (73 aa)) folds into the H15 domain.

This sequence belongs to the histone H1/H5 family. Sperm.

Its subcellular location is the nucleus. The protein resides in the chromosome. Linker histones are implicated in chromatin remodeling and/or transcriptional regulation during spermiogenesis, the process of spermatid maturation into spermatozoa. The sequence is that of Sperm-specific protein PL-I from Spisula solidissima (Atlantic surf-clam).